A 494-amino-acid chain; its full sequence is Glutamyl-tRNA(Gln) amidotransferase subunit A (494 aa).

Catalysis depends on charge relay system residues Lys-81 and Ser-156. Ser-180 acts as the Acyl-ester intermediate in catalysis.

It belongs to the amidase family. GatA subfamily. Heterotrimer of A, B and C subunits.

It carries out the reaction L-glutamyl-tRNA(Gln) + L-glutamine + ATP + H2O = L-glutaminyl-tRNA(Gln) + L-glutamate + ADP + phosphate + H(+). In terms of biological role, allows the formation of correctly charged Gln-tRNA(Gln) through the transamidation of misacylated Glu-tRNA(Gln) in organisms which lack glutaminyl-tRNA synthetase. The reaction takes place in the presence of glutamine and ATP through an activated gamma-phospho-Glu-tRNA(Gln). This chain is Glutamyl-tRNA(Gln) amidotransferase subunit A, found in Mycobacterium bovis (strain ATCC BAA-935 / AF2122/97).